The primary structure comprises 114 residues: Iron-sulfur cluster insertion protein ErpA (114 aa).

Iron-sulfur cluster-binding residues include cysteine 42, cysteine 106, and cysteine 108.

This sequence belongs to the HesB/IscA family. Homodimer. Iron-sulfur cluster is required as a cofactor.

In terms of biological role, required for insertion of 4Fe-4S clusters for at least IspG. The protein is Iron-sulfur cluster insertion protein ErpA of Serratia proteamaculans (strain 568).